Consider the following 258-residue polypeptide: Phosphoribosylformylglycinamidine synthase subunit PurQ (258 aa).

The Glutamine amidotransferase type-1 domain maps to 7–238 (IGILLMEGTN…QAMYLETEKD (232 aa)). C97 (nucleophile) is an active-site residue. Catalysis depends on residues H220 and E222.

In terms of assembly, part of the FGAM synthase complex composed of 1 PurL, 1 PurQ and 2 PurS subunits.

The protein localises to the cytoplasm. The enzyme catalyses N(2)-formyl-N(1)-(5-phospho-beta-D-ribosyl)glycinamide + L-glutamine + ATP + H2O = 2-formamido-N(1)-(5-O-phospho-beta-D-ribosyl)acetamidine + L-glutamate + ADP + phosphate + H(+). The catalysed reaction is L-glutamine + H2O = L-glutamate + NH4(+). Its pathway is purine metabolism; IMP biosynthesis via de novo pathway; 5-amino-1-(5-phospho-D-ribosyl)imidazole from N(2)-formyl-N(1)-(5-phospho-D-ribosyl)glycinamide: step 1/2. Part of the phosphoribosylformylglycinamidine synthase complex involved in the purines biosynthetic pathway. Catalyzes the ATP-dependent conversion of formylglycinamide ribonucleotide (FGAR) and glutamine to yield formylglycinamidine ribonucleotide (FGAM) and glutamate. The FGAM synthase complex is composed of three subunits. PurQ produces an ammonia molecule by converting glutamine to glutamate. PurL transfers the ammonia molecule to FGAR to form FGAM in an ATP-dependent manner. PurS interacts with PurQ and PurL and is thought to assist in the transfer of the ammonia molecule from PurQ to PurL. The protein is Phosphoribosylformylglycinamidine synthase subunit PurQ of Thermoplasma volcanium (strain ATCC 51530 / DSM 4299 / JCM 9571 / NBRC 15438 / GSS1).